We begin with the raw amino-acid sequence, 147 residues long: Ubiquitin-conjugating enzyme E2-17 kDa (147 aa).

Residues 1-147 (MALKRINKEL…AREWTRKYAM (147 aa)) form the UBC core domain. Residue cysteine 85 is the Glycyl thioester intermediate of the active site.

The protein belongs to the ubiquitin-conjugating enzyme family.

The catalysed reaction is S-ubiquitinyl-[E1 ubiquitin-activating enzyme]-L-cysteine + [E2 ubiquitin-conjugating enzyme]-L-cysteine = [E1 ubiquitin-activating enzyme]-L-cysteine + S-ubiquitinyl-[E2 ubiquitin-conjugating enzyme]-L-cysteine.. Its pathway is protein modification; protein ubiquitination. Its function is as follows. Catalyzes the covalent attachment of ubiquitin to other proteins. Mediates the selective degradation of short-lived and abnormal proteins. Required for proper telomere behavior during cell divisions and possibly for ubiquitination of proteins involved in postmeiotic stages of spermatogenesis. Deletion mutations are lethal in homozygotes. This chain is Ubiquitin-conjugating enzyme E2-17 kDa (eff), found in Drosophila melanogaster (Fruit fly).